A 131-amino-acid chain; its full sequence is Small ribosomal subunit protein uS8 (131 aa).

It belongs to the universal ribosomal protein uS8 family. Part of the 30S ribosomal subunit. Contacts proteins S5 and S12.

In terms of biological role, one of the primary rRNA binding proteins, it binds directly to 16S rRNA central domain where it helps coordinate assembly of the platform of the 30S subunit. This is Small ribosomal subunit protein uS8 from Azobacteroides pseudotrichonymphae genomovar. CFP2.